Here is a 203-residue protein sequence, read N- to C-terminus: Twist-related protein 1 (203 aa).

The span at 1 to 18 shows a compositional bias: low complexity; it reads MMQDVSSSPVSPADDSLS. Residues 1–105 are disordered; sequence MMQDVSSSPV…SGGGSPQSYE (105 aa). The span at 34–43 shows a compositional bias: basic residues; it reads RGGRKRRSSR. 2 stretches are compositionally biased toward gly residues: residues 46–65 and 80–100; these read AGGGAGPGGAAGGGVGGGDE and GCGGGGGSAGGGGGSSSGGGS. Residues 109-160 form the bHLH domain; it reads TQRVMANVRGRQRTQSLNEAFAALRKIIPTLPSDKLSKIQTLKLAARYIDFL. The tract at residues 162–192 is sufficient for transactivation activity; the sequence is QVLQSDELDSKMASCSYVAHERLSYAFSVWR.

Efficient DNA binding requires dimerization with another bHLH protein. Homodimer or heterodimer with E proteins such as TCF3. ID1 binds preferentially to TCF3 but does not interact efficiently with TWIST1 so ID1 levels control the amount of TCF3 available to dimerize with TWIST and thus determine the type of dimer formed.

It is found in the nucleus. Functionally, acts as a transcriptional regulator. Inhibits myogenesis by sequestrating E proteins, inhibiting trans-activation by MEF2, and inhibiting DNA-binding by MYOD1 through physical interaction. This interaction probably involves the basic domains of both proteins. Also represses expression of pro-inflammatory cytokines such as TNFA and IL1B. Regulates cranial suture patterning and fusion. Activates transcription as a heterodimer with E proteins. Regulates gene expression differentially, depending on dimer composition. Homodimers induce expression of FGFR2 and POSTN while heterodimers repress FGFR2 and POSTN expression and induce THBS1 expression. Heterodimerization is also required for osteoblast differentiation. Represses the activity of the circadian transcriptional activator: NPAS2-BMAL1 heterodimer. The protein is Twist-related protein 1 (TWIST1) of Callithrix jacchus (White-tufted-ear marmoset).